Reading from the N-terminus, the 234-residue chain is Endonuclease V (234 aa).

The Mg(2+) site is built by D36 and D104.

This sequence belongs to the endonuclease V family. The cofactor is Mg(2+).

It is found in the cytoplasm. It carries out the reaction Endonucleolytic cleavage at apurinic or apyrimidinic sites to products with a 5'-phosphate.. DNA repair enzyme involved in the repair of deaminated bases. Selectively cleaves double-stranded DNA at the second phosphodiester bond 3' to a deoxyinosine leaving behind the intact lesion on the nicked DNA. The sequence is that of Endonuclease V from Yersinia pseudotuberculosis serotype O:1b (strain IP 31758).